A 278-amino-acid chain; its full sequence is Insulin-like growth factor-binding protein-like 1 (278 aa).

The N-terminal stretch at 1 to 25 (MPRLSLLLPLLLLLLLPLLPPLSPS) is a signal peptide. The IGFBP N-terminal domain maps to 34–109 (RRPKCGPCRP…PEGTGLCVCA (76 aa)). 7 disulfides stabilise this stretch: Cys-38–Cys-63, Cys-41–Cys-65, Cys-46–Cys-66, Cys-52–Cys-69, Cys-77–Cys-91, Cys-85–Cys-106, and Cys-115–Cys-151. Residues 95-153 (AAGAAPEGTGLCVCAQRGTVCGSDGRSYPSVCALRLRARHTPRAHPGHLHKARDGPCEF) form the Kazal-like domain. Positions 155–259 (PVVVVPPRSV…GEAESHSTVT (105 aa)) constitute an Ig-like C2-type domain. Asn-166 carries an N-linked (GlcNAc...) asparagine glycan. A disulfide bridge connects residues Cys-176 and Cys-243.

As to expression, expressed at the highest level in both brain and testis, with lower levels in the prostate, bladder and lung.

The protein resides in the secreted. In terms of biological role, IGF-binding proteins prolong the half-life of IGFs and have been shown to either inhibit or stimulate the growth promoting effects of the IGFs in cell culture. They alter the interaction of IGFs with their cell surface receptors. May be a putative tumor suppressor protein. This chain is Insulin-like growth factor-binding protein-like 1 (IGFBPL1), found in Homo sapiens (Human).